The following is a 374-amino-acid chain: RNA polymerase sigma factor SigA (374 aa).

A sigma-70 factor domain-2 region spans residues 141-211 (LAEANLRLVV…TRAIADQART (71 aa)). Residues 165-168 (DLIQ) carry the Interaction with polymerase core subunit RpoC motif. Residues 220 to 296 (ETINKLIRVQ…DQDATSPSDH (77 aa)) are sigma-70 factor domain-3. A sigma-70 factor domain-4 region spans residues 309–362 (VLDTLTDREENVLRLRFGLDDGRTRTLEEVGRVFGVTRERIRQIEAKALRKLRH). Positions 335–354 (LEEVGRVFGVTRERIRQIEA) form a DNA-binding region, H-T-H motif.

This sequence belongs to the sigma-70 factor family. RpoD/SigA subfamily. Interacts transiently with the RNA polymerase catalytic core.

It localises to the cytoplasm. Sigma factors are initiation factors that promote the attachment of RNA polymerase to specific initiation sites and are then released. This sigma factor is the primary sigma factor during exponential growth. This Listeria monocytogenes serovar 1/2a (strain ATCC BAA-679 / EGD-e) protein is RNA polymerase sigma factor SigA.